The following is a 349-amino-acid chain: 26S proteasome non-ATPase regulatory subunit 4 (349 aa).

Positions 5-188 (ATIVCLDNSE…LSDIILQSPI (184 aa)) constitute a VWFA domain. The 20-residue stretch at 204 to 223 (DTDPDLAMALKLSLEEEKQR) folds into the UIM 1 domain. Residues 219–234 (EEKQRQERERKAREEA) are compositionally biased toward basic and acidic residues. 2 disordered regions span residues 219–257 (EEKQ…MDVN) and 274–349 (TDKM…NEKK). A compositionally biased stretch (low complexity) spans 235–253 (NGGSTNSGTTTTTAPTESN). The UIM 2 domain occupies 259-278 (EDDPELAEALALSMATDKME). The span at 280–301 (QSSTTNTDSQPPQQQQQPPTDD) shows a compositional bias: low complexity. Residues 335 to 349 (LSKKDEDKDKDNEKK) are compositionally biased toward basic and acidic residues.

The protein belongs to the proteasome subunit S5A family. As to quaternary structure, the 26S proteasome is composed of a core protease, known as the 20S proteasome, capped at one or both ends by the 19S regulatory complex (RC). The RC is composed of at least 18 different subunits in two subcomplexes, the base and the lid, which form the portions proximal and distal to the 20S proteolytic core, respectively.

In terms of biological role, binds and presumably selects ubiquitin-conjugates for destruction. In Dictyostelium discoideum (Social amoeba), this protein is 26S proteasome non-ATPase regulatory subunit 4 (psmD4).